The following is a 150-amino-acid chain: Interferon antagonist OPG027 (150 aa).

Belongs to the orthopoxvirus OPG027 family.

In terms of biological role, inhibits antiviral activity induced by type I interferons. Does not block signal transduction of IFN, but is important to counteract the host antiviral state induced by a pre-treatment with IFN. This is Interferon antagonist OPG027 (OPG027) from Cynomys gunnisoni (Gunnison's prairie dog).